A 270-amino-acid chain; its full sequence is Hydroxyethylthiazole kinase (270 aa).

Methionine 47 contacts substrate. Positions 123 and 169 each coordinate ATP. Glycine 196 contributes to the substrate binding site.

It belongs to the Thz kinase family. It depends on Mg(2+) as a cofactor.

The catalysed reaction is 5-(2-hydroxyethyl)-4-methylthiazole + ATP = 4-methyl-5-(2-phosphooxyethyl)-thiazole + ADP + H(+). Its pathway is cofactor biosynthesis; thiamine diphosphate biosynthesis; 4-methyl-5-(2-phosphoethyl)-thiazole from 5-(2-hydroxyethyl)-4-methylthiazole: step 1/1. Functionally, catalyzes the phosphorylation of the hydroxyl group of 4-methyl-5-beta-hydroxyethylthiazole (THZ). This is Hydroxyethylthiazole kinase from Roseiflexus sp. (strain RS-1).